The following is a 256-amino-acid chain: Pimeloyl-[acyl-carrier protein] methyl ester esterase (256 aa).

The 228-residue stretch at 15 to 242 (HLVLLHGWGL…AAHAPFISHP (228 aa)) folds into the AB hydrolase-1 domain. Substrate-binding positions include Trp22, 82 to 83 (SL), and 143 to 147 (FLALQ). Ser82 serves as the catalytic Nucleophile. Catalysis depends on residues Asp207 and His235. Substrate is bound at residue His235.

The protein belongs to the AB hydrolase superfamily. Carboxylesterase BioH family. As to quaternary structure, monomer.

Its subcellular location is the cytoplasm. It catalyses the reaction 6-carboxyhexanoyl-[ACP] methyl ester + H2O = 6-carboxyhexanoyl-[ACP] + methanol + H(+). It participates in cofactor biosynthesis; biotin biosynthesis. The physiological role of BioH is to remove the methyl group introduced by BioC when the pimeloyl moiety is complete. It allows to synthesize pimeloyl-ACP via the fatty acid synthetic pathway through the hydrolysis of the ester bonds of pimeloyl-ACP esters. This Salmonella dublin (strain CT_02021853) protein is Pimeloyl-[acyl-carrier protein] methyl ester esterase.